The primary structure comprises 446 residues: Tubulin beta-2 chain (446 aa).

GTP contacts are provided by Gln-11, Glu-69, Ser-138, Gly-142, Thr-143, Gly-144, Asn-204, and Asn-226. Glu-69 provides a ligand contact to Mg(2+). Positions 424 to 446 (QYQEATADEEGEFDEDEEGGGDE) are disordered. A compositionally biased stretch (acidic residues) spans 429–446 (TADEEGEFDEDEEGGGDE).

Belongs to the tubulin family. Dimer of alpha and beta chains. A typical microtubule is a hollow water-filled tube with an outer diameter of 25 nm and an inner diameter of 15 nM. Alpha-beta heterodimers associate head-to-tail to form protofilaments running lengthwise along the microtubule wall with the beta-tubulin subunit facing the microtubule plus end conferring a structural polarity. Microtubules usually have 13 protofilaments but different protofilament numbers can be found in some organisms and specialized cells. Mg(2+) is required as a cofactor.

Its subcellular location is the cytoplasm. It is found in the cytoskeleton. Tubulin is the major constituent of microtubules, a cylinder consisting of laterally associated linear protofilaments composed of alpha- and beta-tubulin heterodimers. Microtubules grow by the addition of GTP-tubulin dimers to the microtubule end, where a stabilizing cap forms. Below the cap, tubulin dimers are in GDP-bound state, owing to GTPase activity of alpha-tubulin. In Drosophila erecta (Fruit fly), this protein is Tubulin beta-2 chain (betaTub85D).